A 313-amino-acid polypeptide reads, in one-letter code: Protein OPG185 (313 aa).

Positions 1-16 (MTQLPILLLLISLVYA) are cleaved as a signal peptide. Over 17 to 274 (TPSPQTSKKI…TSISNYKTKD (258 aa)) the chain is Virion surface. N-linked (GlcNAc...) asparagine; by host glycosylation is found at Asn37, Asn69, Asn112, Asn159, Asn194, and Asn252. A helical membrane pass occupies residues 275-295 (FVEIFGITTLIILSAVAIFCI). At 296–313 (TYYICNKHPRKYKTENKV) the chain is on the intravirion side.

Belongs to the orthopoxvirus OPG185 family. As to quaternary structure, heterodimerizes with OPG040. The heterodimer OPG185-OPG040 interacts with components of the entry fusion complex OPG143 and OPG094. Heterodimer with C3/VPC protein; disulfide-linked. In terms of processing, glycosylated; contains phosphate and sulfate-substituted glycans. O-glycosylation is required for hemagglutination and hemadsorption activities of infected cell membranes.

It localises to the virion membrane. Its subcellular location is the host membrane. Functionally, prevents cell to cell fusion by interacting with and directing the viral OPG040 protein on the host plasma membrane. The OPG185-OPG040 complex associates with components of the entry fusion complex (EFC) presumably to avoid superinfection and syncytium formation. Via its interaction with C3/VCP protein, protects the infected cell and probably also the extracellular enveloped virus from complement attack. The polypeptide is Protein OPG185 (OPG185) (Monkeypox virus).